A 367-amino-acid chain; its full sequence is Cytochrome b (367 aa).

Transmembrane regions (helical) follow at residues methionine 20–methionine 40, tryptophan 64–isoleucine 85, tryptophan 101–leucine 121, and phenylalanine 166–isoleucine 186. Heme b is bound by residues histidine 70 and histidine 84. Residues histidine 170 and histidine 184 each coordinate heme b. Histidine 189 contacts a ubiquinone. Transmembrane regions (helical) follow at residues isoleucine 214–serine 234, leucine 276–serine 296, isoleucine 308–alanine 328, and tyrosine 335–methionine 355.

Belongs to the cytochrome b family. The main subunits of complex b-c1 are: cytochrome b, cytochrome c1 and the Rieske protein. Heme b serves as cofactor.

It is found in the mitochondrion inner membrane. Its function is as follows. Component of the ubiquinol-cytochrome c reductase complex (complex III or cytochrome b-c1 complex) that is part of the mitochondrial respiratory chain. The b-c1 complex mediates electron transfer from ubiquinol to cytochrome c. Contributes to the generation of a proton gradient across the mitochondrial membrane that is then used for ATP synthesis. The chain is Cytochrome b (MT-CYB) from Albinaria caerulea (Land snail).